A 144-amino-acid polypeptide reads, in one-letter code: Large ribosomal subunit protein uL16 (144 aa).

Belongs to the universal ribosomal protein uL16 family. As to quaternary structure, part of the 50S ribosomal subunit.

In terms of biological role, binds 23S rRNA and is also seen to make contacts with the A and possibly P site tRNAs. The sequence is that of Large ribosomal subunit protein uL16 from Clostridium beijerinckii (strain ATCC 51743 / NCIMB 8052) (Clostridium acetobutylicum).